A 433-amino-acid polypeptide reads, in one-letter code: Ribonuclease T2-like (433 aa).

Cystine bridges form between cysteine 28/cysteine 47, cysteine 36/cysteine 95, cysteine 46/cysteine 171, and cysteine 103/cysteine 163. 2 N-linked (GlcNAc...) asparagine glycosylation sites follow: asparagine 38 and asparagine 71. Catalysis depends on residues histidine 88, glutamate 156, and histidine 160. Residues asparagine 221 and asparagine 263 are each glycosylated (N-linked (GlcNAc...) asparagine). A disulfide bond links cysteine 247 and cysteine 283.

The protein belongs to the RNase T2 family.

It is found in the vacuole lumen. The protein resides in the cytoplasm. The enzyme catalyses a ribonucleotidyl-ribonucleotide-RNA + H2O = a 3'-end 3'-phospho-ribonucleotide-RNA + a 5'-end dephospho-ribonucleoside-RNA + H(+). Rnase which modulates cell survival under stress conditions. Released from the vacuole to the cytoplasm during stress to promote tRNA and rRNA cleavage and to activate separately a downstream pathway that promotes cell death. Involved in cell size, vacuolar morphology and growth at high temperatures and high salt concentration. This chain is Ribonuclease T2-like (RNY1), found in Candida glabrata (strain ATCC 2001 / BCRC 20586 / JCM 3761 / NBRC 0622 / NRRL Y-65 / CBS 138) (Yeast).